The following is a 505-amino-acid chain: Acetyl-coenzyme A carboxylase carboxyl transferase subunit beta, chloroplastic (505 aa).

A compositionally biased stretch (low complexity) spans 189 to 205 (ESVSNSKSGSSSIRTGG). Residues 189-213 (ESVSNSKSGSSSIRTGGNSSDFNRR) form a disordered region. In terms of domain architecture, CoA carboxyltransferase N-terminal spans 228–499 (LWVQCENCYG…NQNSSRALGS (272 aa)). The Zn(2+) site is built by Cys-232, Cys-235, Cys-251, and Cys-254. The C4-type zinc-finger motif lies at 232 to 254 (CENCYGLNYKKFVSFKMHICEQC).

The protein belongs to the AccD/PCCB family. As to quaternary structure, acetyl-CoA carboxylase is a heterohexamer composed of biotin carboxyl carrier protein, biotin carboxylase and 2 subunits each of ACCase subunit alpha and ACCase plastid-coded subunit beta (accD). Zn(2+) is required as a cofactor.

It localises to the plastid. The protein resides in the chloroplast stroma. It carries out the reaction N(6)-carboxybiotinyl-L-lysyl-[protein] + acetyl-CoA = N(6)-biotinyl-L-lysyl-[protein] + malonyl-CoA. It functions in the pathway lipid metabolism; malonyl-CoA biosynthesis; malonyl-CoA from acetyl-CoA: step 1/1. Functionally, component of the acetyl coenzyme A carboxylase (ACC) complex. Biotin carboxylase (BC) catalyzes the carboxylation of biotin on its carrier protein (BCCP) and then the CO(2) group is transferred by the transcarboxylase to acetyl-CoA to form malonyl-CoA. This is Acetyl-coenzyme A carboxylase carboxyl transferase subunit beta, chloroplastic from Calycanthus floridus var. glaucus (Eastern sweetshrub).